Here is a 73-residue protein sequence, read N- to C-terminus: Translation initiation factor IF-1 3 (73 aa).

Residues 1–72 form the S1-like domain; sequence MAKEELVEFG…TKGRINYRHK (72 aa).

The protein belongs to the IF-1 family. As to quaternary structure, component of the 30S ribosomal translation pre-initiation complex which assembles on the 30S ribosome in the order IF-2 and IF-3, IF-1 and N-formylmethionyl-tRNA(fMet); mRNA recruitment can occur at any time during PIC assembly.

It localises to the cytoplasm. Its function is as follows. One of the essential components for the initiation of protein synthesis. Stabilizes the binding of IF-2 and IF-3 on the 30S subunit to which N-formylmethionyl-tRNA(fMet) subsequently binds. Helps modulate mRNA selection, yielding the 30S pre-initiation complex (PIC). Upon addition of the 50S ribosomal subunit IF-1, IF-2 and IF-3 are released leaving the mature 70S translation initiation complex. In Cupriavidus metallidurans (strain ATCC 43123 / DSM 2839 / NBRC 102507 / CH34) (Ralstonia metallidurans), this protein is Translation initiation factor IF-1 3.